We begin with the raw amino-acid sequence, 33 residues long: MSDIN-like toxin proprotein 5 (33 aa).

A propeptide spanning residues 1–10 is cleaved from the precursor; the sequence is MSDINATRLP. The cyclopeptide (Ile-Pro) cross-link spans 11–18; sequence IFWFIYFP. A propeptide spanning residues 19-32 is cleaved from the precursor; sequence CVGDNVDNTLTRGE.

It belongs to the MSDIN fungal toxin family. Processed by the macrocyclase-peptidase enzyme POPB to yield a toxic cyclic octapeptide. POPB first removes 10 residues from the N-terminus. Conformational trapping of the remaining peptide forces the enzyme to release this intermediate rather than proceed to macrocyclization. The enzyme rebinds the remaining peptide in a different conformation and catalyzes macrocyclization of the N-terminal 8 residues.

Its function is as follows. Probable toxin that belongs to the MSDIN-like toxin family responsible for a large number of food poisoning cases and deaths. The chain is MSDIN-like toxin proprotein 5 from Amanita phalloides (Death cap).